The following is a 188-amino-acid chain: dCTP deaminase (188 aa).

DCTP-binding positions include 111 to 116, 135 to 137, Gln-156, Tyr-170, and Gln-180; these read KSTYAR and TLE. Glu-137 serves as the catalytic Proton donor/acceptor.

The protein belongs to the dCTP deaminase family. In terms of assembly, homotrimer.

The enzyme catalyses dCTP + H2O + H(+) = dUTP + NH4(+). It functions in the pathway pyrimidine metabolism; dUMP biosynthesis; dUMP from dCTP (dUTP route): step 1/2. In terms of biological role, catalyzes the deamination of dCTP to dUTP. The polypeptide is dCTP deaminase (Herminiimonas arsenicoxydans).